The sequence spans 1145 residues: Adenylate cyclase type 3 (1145 aa).

Residues 1–79 (MPRNQGFSDP…FKRQRHETLL (79 aa)) are Cytoplasmic-facing. A run of 5 helical transmembrane segments spans residues 80–100 (VLVVFAALFDCYVVVMCAVVF), 105–125 (LAPLMVAGFGLVLDIILFVLC), 139–159 (VPYLLWLLISAQIFSYLGLNF), 173–193 (AFFVFSFFITLPLSLSPIVII), and 226–246 (ILANVFLYLCAIIVGIMSYYM). Asp-324, Ile-325, and Asp-368 together coordinate Mg(2+). ATP contacts are provided by residues 324 to 329 (DIVGFT) and 366 to 368 (LGD). A helical membrane pass occupies residues 381 to 401 (EDHAVCSILMGLAMVEAISYV). Topologically, residues 402-631 (REKTKTGVDM…RYSVEKEKQS (230 aa)) are cytoplasmic. An ATP-binding site is contributed by Arg-412. Lys-465 participates in a covalent cross-link: Glycyl lysine isopeptide (Lys-Gly) (interchain with G-Cter in SUMO3). The interval 504–564 (QNGLNGSAVP…DNPSFPNPRR (61 aa)) is disordered. Low complexity-rich tracts occupy residues 516–526 (APASSKPSSPA) and 535–544 (GSAHASGSTS). Phosphoserine is present on Ser-524. A Phosphoserine modification is found at Ser-579. Transmembrane regions (helical) follow at residues 632 to 652 (GAAFSCSCVVLFCTAMVEILI), 663 to 683 (FVVGEVLLLILTICSMAAIFP), and 707 to 727 (WAMLAIFILVMANVVDMLSCL). An N-linked (GlcNAc...) asparagine glycan is attached at Asn-735. A run of 3 helical transmembrane segments spans residues 753-773 (YNYVAVLSLIATIMLVQVSHM), 774-794 (VKLTLMLLVTGAVTALNLYAW), and 834-854 (LPLVPSKYSMTVMMFVMMLSF). Residues 855-1145 (YYFSRHVEKL…TLPHQVVDNP (291 aa)) lie on the Cytoplasmic side of the membrane. Residues Lys-976, 1063 to 1065 (DIW), and 1070 to 1074 (NVASR) each bind ATP. The residue at position 1077 (Ser-1077) is a Phosphoserine; by CaMK2. Residue Lys-1110 coordinates ATP.

It belongs to the adenylyl cyclase class-4/guanylyl cyclase family. Mg(2+) serves as cofactor. The cofactor is Mn(2+). N-glycosylated. In terms of processing, rapidly phosphorylated after stimulation by odorants or forskolin. Phosphorylation by CaMK2 at Ser-1077 down-regulates enzyme activity. Post-translationally, sumoylated. Sumoylation is required for targeting of olfactory cilia. Detected in the acrosomal region of epididymal spermatozoa, the acrosomal region of round spermatids and in elongating spermatids. Detected in cilia in the olfactory epithelium (at protein level). Detected in olfactory epithelium neurons. Detected in brain, testis, late pachytene spermatocytes, round spermatids and elongating spermatids.

It is found in the cell membrane. The protein resides in the cell projection. It localises to the cilium. Its subcellular location is the golgi apparatus. The protein localises to the cytoplasm. The catalysed reaction is ATP = 3',5'-cyclic AMP + diphosphate. Specifically activated by the G alpha protein GNAL/G(olf) in signaling cascades triggered by odorant receptors. Activated by forskolin. After forskolin treatment, activity is further increased by calcium/calmodulin. In the absence of forskolin, calcium/calmodulin has little effect on enzyme activity. Its function is as follows. Catalyzes the formation of the signaling molecule cAMP in response to G-protein signaling. Participates in signaling cascades triggered by odorant receptors via its function in cAMP biosynthesis: specifically activated by G alpha protein GNAL/G(olf) in olfactory epithelium. Required for the perception of odorants. Required for normal sperm motility and normal male fertility. Plays a role in regulating insulin levels and body fat accumulation in response to a high fat diet. The protein is Adenylate cyclase type 3 (Adcy3) of Mus musculus (Mouse).